A 176-amino-acid polypeptide reads, in one-letter code: Flavodoxin (176 aa).

The Flavodoxin-like domain maps to 4 to 172; the sequence is IGIFFGTDTG…RLASWLEEIK (169 aa).

This sequence belongs to the flavodoxin family. FMN serves as cofactor.

Low-potential electron donor to a number of redox enzymes. NifF is the electron donor to nitrogenase. This is Flavodoxin (nifF) from Klebsiella pneumoniae.